The primary structure comprises 259 residues: Ribonuclease HII (259 aa).

Residues 72-259 enclose the RNase H type-2 domain; sequence ERIAGIDEAG…PVREALGVQS (188 aa). A divalent metal cation contacts are provided by Asp78, Glu79, and Asp170.

The protein belongs to the RNase HII family. Mn(2+) serves as cofactor. It depends on Mg(2+) as a cofactor.

It localises to the cytoplasm. It catalyses the reaction Endonucleolytic cleavage to 5'-phosphomonoester.. Functionally, endonuclease that specifically degrades the RNA of RNA-DNA hybrids. In Geobacillus thermodenitrificans (strain NG80-2), this protein is Ribonuclease HII.